Consider the following 239-residue polypeptide: Tumor protein p53-inducible nuclear protein 1 (239 aa).

Residues 25-37 carry the LIR motif; that stretch reads EKEDDEWILVDFI.

Interacts with p53/TP53 and HIPK2. Interacts with PRKCG, GABARAP, GABARAPL1, GABARAPL2, MAP1LC3A, MAP1LC3B and MAP1LC3C. As to expression, specifically expressed by acinar cells of chronic pancreatitis tissue.

It localises to the cytoplasm. It is found in the cytosol. Its subcellular location is the nucleus. The protein resides in the PML body. The protein localises to the cytoplasmic vesicle. It localises to the autophagosome. Antiproliferative and proapoptotic protein involved in cell stress response which acts as a dual regulator of transcription and autophagy. Acts as a positive regulator of autophagy. In response to cellular stress or activation of autophagy, relocates to autophagosomes where it interacts with autophagosome-associated proteins GABARAP, GABARAPL1/L2, MAP1LC3A/B/C and regulates autophagy. Acts as an antioxidant and plays a major role in p53/TP53-driven oxidative stress response. Possesses both a p53/TP53-independent intracellular reactive oxygen species (ROS) regulatory function and a p53/TP53-dependent transcription regulatory function. Positively regulates p53/TP53 and p73/TP73 and stimulates their capacity to induce apoptosis and regulate cell cycle. In response to double-strand DNA breaks, promotes p53/TP53 phosphorylation on 'Ser-46' and subsequent apoptosis. Acts as a tumor suppressor by inducing cell death by an autophagy and caspase-dependent mechanism. Can reduce cell migration by regulating the expression of SPARC. The polypeptide is Tumor protein p53-inducible nuclear protein 1 (Trp53inp1) (Rattus norvegicus (Rat)).